The following is a 481-amino-acid chain: Aspartyl/glutamyl-tRNA(Asn/Gln) amidotransferase subunit B (481 aa).

This sequence belongs to the GatB/GatE family. GatB subfamily. Heterotrimer of A, B and C subunits.

The enzyme catalyses L-glutamyl-tRNA(Gln) + L-glutamine + ATP + H2O = L-glutaminyl-tRNA(Gln) + L-glutamate + ADP + phosphate + H(+). It catalyses the reaction L-aspartyl-tRNA(Asn) + L-glutamine + ATP + H2O = L-asparaginyl-tRNA(Asn) + L-glutamate + ADP + phosphate + 2 H(+). In terms of biological role, allows the formation of correctly charged Asn-tRNA(Asn) or Gln-tRNA(Gln) through the transamidation of misacylated Asp-tRNA(Asn) or Glu-tRNA(Gln) in organisms which lack either or both of asparaginyl-tRNA or glutaminyl-tRNA synthetases. The reaction takes place in the presence of glutamine and ATP through an activated phospho-Asp-tRNA(Asn) or phospho-Glu-tRNA(Gln). The polypeptide is Aspartyl/glutamyl-tRNA(Asn/Gln) amidotransferase subunit B (Pseudomonas entomophila (strain L48)).